We begin with the raw amino-acid sequence, 250 residues long: Ubiquinone/menaquinone biosynthesis C-methyltransferase UbiE (250 aa).

S-adenosyl-L-methionine contacts are provided by residues Thr-73, Asp-94, 122-123 (NA), and Ser-139.

This sequence belongs to the class I-like SAM-binding methyltransferase superfamily. MenG/UbiE family.

The enzyme catalyses a 2-demethylmenaquinol + S-adenosyl-L-methionine = a menaquinol + S-adenosyl-L-homocysteine + H(+). The catalysed reaction is a 2-methoxy-6-(all-trans-polyprenyl)benzene-1,4-diol + S-adenosyl-L-methionine = a 5-methoxy-2-methyl-3-(all-trans-polyprenyl)benzene-1,4-diol + S-adenosyl-L-homocysteine + H(+). Its pathway is quinol/quinone metabolism; menaquinone biosynthesis; menaquinol from 1,4-dihydroxy-2-naphthoate: step 2/2. It participates in cofactor biosynthesis; ubiquinone biosynthesis. Functionally, methyltransferase required for the conversion of demethylmenaquinol (DMKH2) to menaquinol (MKH2) and the conversion of 2-polyprenyl-6-methoxy-1,4-benzoquinol (DDMQH2) to 2-polyprenyl-3-methyl-6-methoxy-1,4-benzoquinol (DMQH2). The polypeptide is Ubiquinone/menaquinone biosynthesis C-methyltransferase UbiE (Francisella philomiragia subsp. philomiragia (strain ATCC 25017 / CCUG 19701 / FSC 153 / O#319-036)).